Consider the following 356-residue polypeptide: tRNA pseudouridine synthase D (356 aa).

Catalysis depends on Asp84, which acts as the Nucleophile. A TRUD domain is found at 159 to 302 (GVPNYYGPQR…RRGARRPIRV (144 aa)).

Belongs to the pseudouridine synthase TruD family.

It carries out the reaction uridine(13) in tRNA = pseudouridine(13) in tRNA. Functionally, responsible for synthesis of pseudouridine from uracil-13 in transfer RNAs. The sequence is that of tRNA pseudouridine synthase D from Thermus thermophilus (strain ATCC BAA-163 / DSM 7039 / HB27).